A 166-amino-acid chain; its full sequence is Interleukin-3 (166 aa).

Positions 1 to 26 are cleaved as a signal peptide; it reads MVLASSTTSIHTMLLLLLMLFHLGLQ. Residue N42 is glycosylated (N-linked (GlcNAc...) asparagine). 2 disulfides stabilise this stretch: C43/C106 and C105/C166. N112 carries N-linked (GlcNAc...) asparagine; partial glycosylation. The segment at 145–166 is disordered; the sequence is LTSRPPQPASGSVSPNRGTVEC.

The protein belongs to the IL-3 family. Monomer. Activated T-cells, mast cells, natural killer cells.

It localises to the secreted. In terms of biological role, cytokine secreted predominantly by activated T-lymphocytes as well as mast cells and osteoblastic cells that controls the production and differentiation of hematopoietic progenitor cells into lineage-restricted cells. Also stimulates mature basophils, eosinophils, and monocytes to become functionally activated. In addition, plays an important role in neural cell proliferation and survival. Participates as well in bone homeostasis and inhibits osteoclast differentiation by preventing NF-kappa-B nuclear translocation and activation. Mechanistically, exerts its biological effects through a receptor composed of IL3RA subunit and a signal transducing subunit IL3RB. Receptor stimulation results in the rapid activation of JAK2 kinase activity leading to STAT5-mediated transcriptional program. Alternatively, contributes to cell survival under oxidative stress in non-hematopoietic systems by activating pathways mediated by PI3K/AKT and ERK. This chain is Interleukin-3 (Il3), found in Mus musculus (Mouse).